A 328-amino-acid chain; its full sequence is Integrator complex subunit 12 (328 aa).

The interval 1–45 (MAANIAAAAAAAQEVDPVLKKAIKLLHSSNPTSAAELRLLLDEAL) is sufficient for binding to IntS1 and IntS9 and for 3'-end snRNA processing. The PHD-type zinc finger occupies 128–185 (DLNCCVCGEMVFTATNRLIECSKCGAMYHQECHKPPITKEEAADDQEQNWQCDTCCNK). Composition is skewed to low complexity over residues 215–233 (KAKSSVASSRSSNSSNSSS), 241–264 (SSSTNASSSSSSKHGHKSSSSSSS), 274–283 (KSTAASSLSA), and 292–311 (SSGTSSRRSGSSTKSSSKSS). Positions 215 to 328 (KAKSSVASSR…GSSSKRRSKQ (114 aa)) are disordered.

Belongs to the Integrator subunit 12 family. In terms of assembly, belongs to the multiprotein complex Integrator, at least composed of IntS1, IntS2, IntS3, IntS4, omd/IntS5, IntS6, defl/IntS7, IntS8, IntS9, IntS10, IntS11, IntS12, asun/IntS13, IntS14 and IntS15. The core complex associates with protein phosphatase 2A subunits mts/PP2A and Pp2A-29B, to form the Integrator-PP2A (INTAC) complex. Within the complex, interacts with IntS1 and IntS9. Interaction with IntS1 is likely to be important for promoting 3'-end processing of snRNAs.

The protein localises to the nucleus. Its function is as follows. Component of the integrator complex, a multiprotein complex that terminates RNA polymerase II (Pol II) transcription in the promoter-proximal region of genes. The integrator complex provides a quality checkpoint during transcription elongation by driving premature transcription termination of transcripts that are unfavorably configured for transcriptional elongation: the complex terminates transcription by (1) catalyzing dephosphorylation of the C-terminal domain (CTD) of Pol II subunit Polr2A/Rbp1 and Spt5, and (2) degrading the exiting nascent RNA transcript via endonuclease activity. The integrator complex is also involved in the 3'-end processing of the U7 snRNA, and also the spliceosomal snRNAs U1, U2, U4 and U5. Required for the normal expression of the Integrator complex component IntS1. The chain is Integrator complex subunit 12 from Drosophila melanogaster (Fruit fly).